Reading from the N-terminus, the 539-residue chain is Glycerophosphoinositol inositolphosphodiesterase GDPD2 (539 aa).

Over 1–40 (MADSPGCCSIWARCLHCLYSCHWRKYPKQKMQTSKCDCIW) the chain is Cytoplasmic. Residues 41–61 (FGLLFLTFLLSLGWLYIGLIL) form a helical membrane-spanning segment. Residues 62-83 (LNDLHNFNEFLFRHWGHWMDWS) are Extracellular-facing. A helical membrane pass occupies residues 84 to 104 (LIVLLVVSLLVTYASLLLLLG). Residues 105–121 (LLLQLCGQPLHLHSLHK) lie on the Cytoplasmic side of the membrane. A helical transmembrane segment spans residues 122–142 (VLLLLIVLLVAAGLVGLDIQW). At 143–154 (RQEWHSLRLSLQ) the chain is on the extracellular side. The chain crosses the membrane as a helical span at residues 155–175 (ATAPFLHIGAVAGITLLAWPV). Residues 176–189 (ADTFYRIHPRGPKV) lie on the Cytoplasmic side of the membrane. Residues 190-210 (LLLLLFFGVTLVIYLMPLLFI) traverse the membrane as a helical segment. The Extracellular portion of the chain corresponds to 211–491 (SSPCIMKLRD…PLWLLPPQKY (281 aa)). The GP-PDE domain maps to 225–480 (PGLVGHRGAP…NACQLLQQMQ (256 aa)). 3 residues coordinate a divalent metal cation: glutamate 257, aspartate 259, and histidine 272. N-linked (GlcNAc...) asparagine glycosylation occurs at asparagine 333. The helical transmembrane segment at 492-512 (LMIWVITDCASILLLLSIFLL) threads the bilayer. Topologically, residues 513-539 (RGGCAKRNRTGLETAVLLTKINNFASE) are cytoplasmic.

The protein belongs to the glycerophosphoryl diester phosphodiesterase family. Ca(2+) serves as cofactor. Detected in spleen, femur and calvaria.

Its subcellular location is the cell membrane. It localises to the cytoplasm. It is found in the cytoskeleton. The catalysed reaction is sn-glycero-3-phospho-1D-myo-inositol + H2O = 1D-myo-inositol 1-phosphate + glycerol + H(+). Its function is as follows. Has glycerophosphoinositol inositolphosphodiesterase activity and specifically hydrolyzes glycerophosphoinositol, with no activity for other substrates such as glycerophosphoinositol 4-phosphate, glycerophosphocholine, glycerophosphoethanolamine, and glycerophosphoserine. Accelerates the program of osteoblast differentiation and growth. May play a role in remodeling of the actin cytoskeleton. The chain is Glycerophosphoinositol inositolphosphodiesterase GDPD2 (Gdpd2) from Mus musculus (Mouse).